The primary structure comprises 269 residues: Formamidopyrimidine-DNA glycosylase (269 aa).

Pro-2 functions as the Schiff-base intermediate with DNA in the catalytic mechanism. Glu-3 serves as the catalytic Proton donor. The active-site Proton donor; for beta-elimination activity is Lys-57. Positions 90, 109, and 150 each coordinate DNA. An FPG-type zinc finger spans residues Gln-235–Lys-269. Arg-259 acts as the Proton donor; for delta-elimination activity in catalysis.

This sequence belongs to the FPG family. Monomer. Requires Zn(2+) as cofactor.

The catalysed reaction is Hydrolysis of DNA containing ring-opened 7-methylguanine residues, releasing 2,6-diamino-4-hydroxy-5-(N-methyl)formamidopyrimidine.. It catalyses the reaction 2'-deoxyribonucleotide-(2'-deoxyribose 5'-phosphate)-2'-deoxyribonucleotide-DNA = a 3'-end 2'-deoxyribonucleotide-(2,3-dehydro-2,3-deoxyribose 5'-phosphate)-DNA + a 5'-end 5'-phospho-2'-deoxyribonucleoside-DNA + H(+). Functionally, involved in base excision repair of DNA damaged by oxidation or by mutagenic agents. Acts as a DNA glycosylase that recognizes and removes damaged bases. Has a preference for oxidized purines, such as 7,8-dihydro-8-oxoguanine (8-oxoG). Has AP (apurinic/apyrimidinic) lyase activity and introduces nicks in the DNA strand. Cleaves the DNA backbone by beta-delta elimination to generate a single-strand break at the site of the removed base with both 3'- and 5'-phosphates. This chain is Formamidopyrimidine-DNA glycosylase, found in Salmonella paratyphi C (strain RKS4594).